A 156-amino-acid chain; its full sequence is Small ribosomal subunit protein uS7 (156 aa).

The protein belongs to the universal ribosomal protein uS7 family. Part of the 30S ribosomal subunit. Contacts proteins S9 and S11.

Its function is as follows. One of the primary rRNA binding proteins, it binds directly to 16S rRNA where it nucleates assembly of the head domain of the 30S subunit. Is located at the subunit interface close to the decoding center, probably blocks exit of the E-site tRNA. The sequence is that of Small ribosomal subunit protein uS7 from Shewanella amazonensis (strain ATCC BAA-1098 / SB2B).